Consider the following 620-residue polypeptide: 1-deoxy-D-xylulose-5-phosphate synthase (620 aa).

Residues His-80 and 121–123 (GHS) each bind thiamine diphosphate. Asp-152 lines the Mg(2+) pocket. Thiamine diphosphate-binding positions include 153 to 154 (GA), Asn-181, Tyr-288, and Glu-370. Asn-181 provides a ligand contact to Mg(2+).

This sequence belongs to the transketolase family. DXPS subfamily. Homodimer. It depends on Mg(2+) as a cofactor. Thiamine diphosphate is required as a cofactor.

It carries out the reaction D-glyceraldehyde 3-phosphate + pyruvate + H(+) = 1-deoxy-D-xylulose 5-phosphate + CO2. Its pathway is metabolic intermediate biosynthesis; 1-deoxy-D-xylulose 5-phosphate biosynthesis; 1-deoxy-D-xylulose 5-phosphate from D-glyceraldehyde 3-phosphate and pyruvate: step 1/1. In terms of biological role, catalyzes the acyloin condensation reaction between C atoms 2 and 3 of pyruvate and glyceraldehyde 3-phosphate to yield 1-deoxy-D-xylulose-5-phosphate (DXP). This Escherichia coli (strain SMS-3-5 / SECEC) protein is 1-deoxy-D-xylulose-5-phosphate synthase.